We begin with the raw amino-acid sequence, 338 residues long: Aspartate--ammonia ligase (338 aa).

Belongs to the class-II aminoacyl-tRNA synthetase family. AsnA subfamily.

The protein localises to the cytoplasm. The enzyme catalyses L-aspartate + NH4(+) + ATP = L-asparagine + AMP + diphosphate + H(+). It functions in the pathway amino-acid biosynthesis; L-asparagine biosynthesis; L-asparagine from L-aspartate (ammonia route): step 1/1. The chain is Aspartate--ammonia ligase from Lactobacillus delbrueckii subsp. bulgaricus (strain ATCC BAA-365 / Lb-18).